Consider the following 397-residue polypeptide: Phosphopentomutase (397 aa).

Aspartate 12, aspartate 289, histidine 294, aspartate 330, histidine 331, and histidine 342 together coordinate Mn(2+).

Belongs to the phosphopentomutase family. Mn(2+) serves as cofactor.

Its subcellular location is the cytoplasm. It carries out the reaction 2-deoxy-alpha-D-ribose 1-phosphate = 2-deoxy-D-ribose 5-phosphate. The enzyme catalyses alpha-D-ribose 1-phosphate = D-ribose 5-phosphate. The protein operates within carbohydrate degradation; 2-deoxy-D-ribose 1-phosphate degradation; D-glyceraldehyde 3-phosphate and acetaldehyde from 2-deoxy-alpha-D-ribose 1-phosphate: step 1/2. Isomerase that catalyzes the conversion of deoxy-ribose 1-phosphate (dRib-1-P) and ribose 1-phosphate (Rib-1-P) to deoxy-ribose 5-phosphate (dRib-5-P) and ribose 5-phosphate (Rib-5-P), respectively. This is Phosphopentomutase from Limosilactobacillus reuteri (strain DSM 20016) (Lactobacillus reuteri).